The sequence spans 95 residues: Cystatin-A2 (95 aa).

A Secondary area of contact motif is present at residues 47-51 (QLVNG).

It belongs to the cystatin family.

The protein resides in the cytoplasm. Functionally, intracellular thiol proteinase inhibitor. Inhibits cathepsin B, but not papain. The chain is Cystatin-A2 (cpiB) from Dictyostelium discoideum (Social amoeba).